The following is a 542-amino-acid chain: Protein MPA43 (542 aa).

The protein is Protein MPA43 (MPA43) of Saccharomyces cerevisiae (strain ATCC 204508 / S288c) (Baker's yeast).